A 644-amino-acid polypeptide reads, in one-letter code: MVTALSDVNNTDNYGAGQIQVLEGLEAVRKRPGMYIGSTSERGLHHLVWEIVDNSIDEALAGYANQIEVVIEKDNWIKVTDNGRGIPVDIQEKMGRPAVEVILTVLHAGGKFGGGGYKVSGGLHGVGSSVVNALSQDLEVYVHRNETIYHQAYKKGVPQFDLKEVGTTDKTGTVIRFKADGEIFTETTVYNYETLQQRIRELAFLNKGIQITLRDERDEENVREDSYHYEGGIKSYVELLNENKEPIHDEPIYIHQSKDDIEVEIAIQYNSGYATNLLTYANNIHTYEGGTHEDGFKRALTRVLNSYGLSSKIMKEDKDRLSGEDTREGMTAIISIKHGDPQFEGQTKTKLGNSEVRQVVDKLFSEHFERFLYENPQVARTVVEKGIMAARARVAAKKAREVTRRKSALDVASLPGKLADCSSKSPEECEIFLVEGDSAGGSTKSGRDSRTQAILPLRGKILNVEKARLDRILNNNEIRQMITAFGTGIGGDFDLAKARYHKIVIMTDADVDGAHIRTLLLTFFYRFMRPLIEAGYVYIAQPPLYKLTQGKQKYYVYNDRELDKLKSELNPTPKWSIARYKGLGEMNADQLWETTMNPEHRALLQVKLEDAIEADQTFEMLMGDVVENRRQFIEDNAVYANLDF.

A Toprim domain is found at 429-543 (CEIFLVEGDS…AGYVYIAQPP (115 aa)). 3 residues coordinate Mg(2+): E435, D508, and D510.

This sequence belongs to the type II topoisomerase GyrB family. As to quaternary structure, heterotetramer, composed of two GyrA and two GyrB chains. In the heterotetramer, GyrA contains the active site tyrosine that forms a transient covalent intermediate with DNA, while GyrB binds cofactors and catalyzes ATP hydrolysis. The cofactor is Mg(2+). Mn(2+) is required as a cofactor. Ca(2+) serves as cofactor.

The protein resides in the cytoplasm. The catalysed reaction is ATP-dependent breakage, passage and rejoining of double-stranded DNA.. In terms of biological role, a type II topoisomerase that negatively supercoils closed circular double-stranded (ds) DNA in an ATP-dependent manner to modulate DNA topology and maintain chromosomes in an underwound state. Negative supercoiling favors strand separation, and DNA replication, transcription, recombination and repair, all of which involve strand separation. Also able to catalyze the interconversion of other topological isomers of dsDNA rings, including catenanes and knotted rings. Type II topoisomerases break and join 2 DNA strands simultaneously in an ATP-dependent manner. The sequence is that of DNA gyrase subunit B from Staphylococcus aureus (strain MRSA252).